The sequence spans 358 residues: tRNA-specific 2-thiouridylase MnmA (358 aa).

ATP contacts are provided by residues 6 to 13 (AMSGGVDS) and Leu32. The active-site Nucleophile is Cys101. Cys101 and Cys193 are disulfide-bonded. Position 125 (Gly125) interacts with ATP. The interval 143 to 145 (KDQ) is interaction with tRNA. Catalysis depends on Cys193, which acts as the Cysteine persulfide intermediate.

This sequence belongs to the MnmA/TRMU family.

It localises to the cytoplasm. The enzyme catalyses S-sulfanyl-L-cysteinyl-[protein] + uridine(34) in tRNA + AH2 + ATP = 2-thiouridine(34) in tRNA + L-cysteinyl-[protein] + A + AMP + diphosphate + H(+). Functionally, catalyzes the 2-thiolation of uridine at the wobble position (U34) of tRNA, leading to the formation of s(2)U34. The sequence is that of tRNA-specific 2-thiouridylase MnmA from Mycobacterium leprae (strain Br4923).